The sequence spans 1004 residues: Polyhomeotic-like protein 1 (1004 aa).

Positions 1-22 are enriched in low complexity; the sequence is METESEQNSNSTNGSSSSGGSS. Disordered regions lie at residues 1 to 24, 212 to 241, 261 to 355, 432 to 512, 556 to 589, and 636 to 672; these read METESEQNSNSTNGSSSSGGSSRP, NQQASAQGPQMQGSTQKAIPPGASPVSSLS, SLNL…NLTR, QQQQ…QLGA, RGMPGTVQSGQAHLASSPPSSQAPGALQECPPTL, and TLAVKRKADSEEERDDVSTLGSMLPAKASPVAESPKV. Residues 212–228 show a composition bias toward polar residues; that stretch reads NQQASAQGPQMQGSTQK. Gly residues predominate over residues 279–303; sequence MGPGGGGQAHGGLGQLPSSGMGGGS. Polar residues-rich tracts occupy residues 319-329 and 344-355; these read QTVTVSQGSQT and SGQQNVGMNLTR. Residues 432–447 are compositionally biased toward low complexity; that stretch reads QQQQQQQQPQATTLTA. Residues 448 to 458 show a composition bias toward pro residues; the sequence is PQPPQVPPTQQ. A compositionally biased stretch (low complexity) spans 459–482; the sequence is VPPSQSQQQAQTLVVQPMLQSSPL. The segment covering 483-495 has biased composition (pro residues); sequence SLPPDAAPKPPIP. A compositionally biased stretch (low complexity) spans 566–583; the sequence is QAHLASSPPSSQAPGALQ. Ser645 carries the phosphoserine modification. Residue Lys763 forms a Glycyl lysine isopeptide (Lys-Gly) (interchain with G-Cter in SUMO2) linkage. The FCS-type zinc-finger motif lies at 791–825; sequence LDKKANLLKCEYCGKYAPAEQFRGSKRFCSMTCAK. Residues Cys800, Cys803, Cys819, and Cys823 each coordinate Zn(2+). Residues 848-928 are disordered; it reads ANYARVRRRG…APPTPELHGI (81 aa). Ser898 bears the Phosphoserine mark. A Phosphothreonine modification is found at Thr922. Positions 940-1004 constitute an SAM domain; that stretch reads WSVEEVYEFI…CAKINVLKET (65 aa).

As to quaternary structure, homodimer. Component of a PRC1-like complex. Interacts with RNF2 and CBX7. Interacts with PHC2, PHC2 and BMI1.

It localises to the nucleus. In terms of biological role, component of a Polycomb group (PcG) multiprotein PRC1-like complex, a complex class required to maintain the transcriptionally repressive state of many genes, including Hox genes, throughout development. PcG PRC1 complex acts via chromatin remodeling and modification of histones; it mediates monoubiquitination of histone H2A 'Lys-119', rendering chromatin heritably changed in its expressibility. Required for proper control of cellular levels of GMNN expression. The protein is Polyhomeotic-like protein 1 (PHC1) of Homo sapiens (Human).